A 207-amino-acid polypeptide reads, in one-letter code: 2,3-bisphosphoglycerate-dependent phosphoglycerate mutase (207 aa).

Residues 10-17 (RHGQSEWN), 23-24 (TG), R62, 89-92 (ERDY), K100, 116-117 (RR), and 160-161 (GN) contribute to the substrate site. The Tele-phosphohistidine intermediate role is filled by H11. The active-site Proton donor/acceptor is the E89.

It belongs to the phosphoglycerate mutase family. BPG-dependent PGAM subfamily. Homodimer.

It catalyses the reaction (2R)-2-phosphoglycerate = (2R)-3-phosphoglycerate. The protein operates within carbohydrate degradation; glycolysis; pyruvate from D-glyceraldehyde 3-phosphate: step 3/5. In terms of biological role, catalyzes the interconversion of 2-phosphoglycerate and 3-phosphoglycerate. The polypeptide is 2,3-bisphosphoglycerate-dependent phosphoglycerate mutase (Nitrobacter winogradskyi (strain ATCC 25391 / DSM 10237 / CIP 104748 / NCIMB 11846 / Nb-255)).